The sequence spans 211 residues: Protein-L-isoaspartate O-methyltransferase (211 aa).

Ser-60 is an active-site residue.

Belongs to the methyltransferase superfamily. L-isoaspartyl/D-aspartyl protein methyltransferase family.

Its subcellular location is the cytoplasm. It catalyses the reaction [protein]-L-isoaspartate + S-adenosyl-L-methionine = [protein]-L-isoaspartate alpha-methyl ester + S-adenosyl-L-homocysteine. Catalyzes the methyl esterification of L-isoaspartyl residues in peptides and proteins that result from spontaneous decomposition of normal L-aspartyl and L-asparaginyl residues. It plays a role in the repair and/or degradation of damaged proteins. The sequence is that of Protein-L-isoaspartate O-methyltransferase from Ectopseudomonas mendocina (strain ymp) (Pseudomonas mendocina).